The primary structure comprises 139 residues: Transcriptional regulator WhiB5 (139 aa).

The region spanning 4–77 (PCATDPELWF…AGIKLPGGQY (74 aa)) is the 4Fe-4S Wbl-type domain. C5, C41, C45, and C53 together coordinate [4Fe-4S] cluster.

Belongs to the WhiB family. [4Fe-4S] cluster serves as cofactor. The Fe-S cluster can be nitrosylated by nitric oxide (NO). Post-translationally, upon Fe-S cluster removal intramolecular disulfide bonds are formed.

Its subcellular location is the cytoplasm. Its function is as follows. A transcription factor that is probably redox-responsive. Probably plays a role in immunomodulation and reactivation after chronic infection. Its induction results in transcription of a number of genes including sigM, and the genes for 2 type VII secretion systems ESX-2 and ESX-4. Seems to negatively regulate its own expression. The apo-form has been shown to act as a protein disulfide reductase. The apo- but not holo-form probably binds DNA. This Mycobacterium tuberculosis (strain ATCC 25618 / H37Rv) protein is Transcriptional regulator WhiB5 (whiB5).